The sequence spans 186 residues: dCTP deaminase (186 aa).

Residue 107–112 (KSTYAR) participates in dCTP binding. Glutamate 133 acts as the Proton donor/acceptor in catalysis. Residues glutamine 152, tyrosine 166, and glutamine 176 each coordinate dCTP.

This sequence belongs to the dCTP deaminase family. In terms of assembly, homotrimer.

It catalyses the reaction dCTP + H2O + H(+) = dUTP + NH4(+). It functions in the pathway pyrimidine metabolism; dUMP biosynthesis; dUMP from dCTP (dUTP route): step 1/2. Catalyzes the deamination of dCTP to dUTP. The polypeptide is dCTP deaminase (Campylobacter fetus subsp. fetus (strain 82-40)).